We begin with the raw amino-acid sequence, 205 residues long: Ribonuclease HII (205 aa).

Positions 14–205 constitute an RNase H type-2 domain; that stretch reads SLISGIDEAG…SFRLKQLGEK (192 aa). Asp-20, Glu-21, and Asp-117 together coordinate a divalent metal cation.

This sequence belongs to the RNase HII family. It depends on Mn(2+) as a cofactor. Mg(2+) is required as a cofactor.

It is found in the cytoplasm. The enzyme catalyses Endonucleolytic cleavage to 5'-phosphomonoester.. Endonuclease that specifically degrades the RNA of RNA-DNA hybrids. This chain is Ribonuclease HII, found in Chlorobium phaeobacteroides (strain DSM 266 / SMG 266 / 2430).